The chain runs to 149 residues: Macrodomain Ter protein (149 aa).

Belongs to the MatP family. As to quaternary structure, homodimer.

The protein resides in the cytoplasm. Its function is as follows. Required for spatial organization of the terminus region of the chromosome (Ter macrodomain) during the cell cycle. Prevents early segregation of duplicated Ter macrodomains during cell division. Binds specifically to matS, which is a 13 bp signature motif repeated within the Ter macrodomain. The protein is Macrodomain Ter protein of Vibrio cholerae serotype O1 (strain ATCC 39315 / El Tor Inaba N16961).